A 466-amino-acid chain; its full sequence is Ribulose bisphosphate carboxylase large chain (466 aa).

Lys5 is modified (N6,N6,N6-trimethyllysine). Residues Asn114 and Thr164 each contribute to the substrate site. Residue Lys166 is the Proton acceptor of the active site. Lys168 serves as a coordination point for substrate. Lys192, Asp194, and Glu195 together coordinate Mg(2+). At Lys192 the chain carries N6-carboxylysine. The active-site Proton acceptor is His285. Arg286, His318, and Ser370 together coordinate substrate.

It belongs to the RuBisCO large chain family. Type I subfamily. Heterohexadecamer of 8 large chains and 8 small chains; disulfide-linked. The disulfide link is formed within the large subunit homodimers. Mg(2+) is required as a cofactor. Post-translationally, the disulfide bond which can form in the large chain dimeric partners within the hexadecamer appears to be associated with oxidative stress and protein turnover.

Its subcellular location is the plastid. The protein localises to the chloroplast. It catalyses the reaction 2 (2R)-3-phosphoglycerate + 2 H(+) = D-ribulose 1,5-bisphosphate + CO2 + H2O. The enzyme catalyses D-ribulose 1,5-bisphosphate + O2 = 2-phosphoglycolate + (2R)-3-phosphoglycerate + 2 H(+). In terms of biological role, ruBisCO catalyzes two reactions: the carboxylation of D-ribulose 1,5-bisphosphate, the primary event in carbon dioxide fixation, as well as the oxidative fragmentation of the pentose substrate in the photorespiration process. Both reactions occur simultaneously and in competition at the same active site. The polypeptide is Ribulose bisphosphate carboxylase large chain (Silene gallica (Common catchfly)).